A 359-amino-acid polypeptide reads, in one-letter code: Dual-specificity RNA methyltransferase RlmN (359 aa).

Residue Glu90 is the Proton acceptor of the active site. Residues 109–342 (HQERYTVCIS…CTIRESKGLD (234 aa)) enclose the Radical SAM core domain. Cysteines 116 and 347 form a disulfide. 3 residues coordinate [4Fe-4S] cluster: Cys123, Cys127, and Cys130. S-adenosyl-L-methionine-binding positions include 173–174 (GE), Ser205, 228–230 (SLH), and Asn304. The S-methylcysteine intermediate role is filled by Cys347.

The protein belongs to the radical SAM superfamily. RlmN family. Requires [4Fe-4S] cluster as cofactor.

It localises to the cytoplasm. It carries out the reaction adenosine(2503) in 23S rRNA + 2 reduced [2Fe-2S]-[ferredoxin] + 2 S-adenosyl-L-methionine = 2-methyladenosine(2503) in 23S rRNA + 5'-deoxyadenosine + L-methionine + 2 oxidized [2Fe-2S]-[ferredoxin] + S-adenosyl-L-homocysteine. The catalysed reaction is adenosine(37) in tRNA + 2 reduced [2Fe-2S]-[ferredoxin] + 2 S-adenosyl-L-methionine = 2-methyladenosine(37) in tRNA + 5'-deoxyadenosine + L-methionine + 2 oxidized [2Fe-2S]-[ferredoxin] + S-adenosyl-L-homocysteine. Functionally, specifically methylates position 2 of adenine 2503 in 23S rRNA and position 2 of adenine 37 in tRNAs. m2A2503 modification seems to play a crucial role in the proofreading step occurring at the peptidyl transferase center and thus would serve to optimize ribosomal fidelity. In Sulfurovum sp. (strain NBC37-1), this protein is Dual-specificity RNA methyltransferase RlmN.